A 331-amino-acid chain; its full sequence is tRNA(Ile)-lysidine synthase (331 aa).

Residue 29–34 coordinates ATP; it reads SGGPDS.

It belongs to the tRNA(Ile)-lysidine synthase family.

Its subcellular location is the cytoplasm. It catalyses the reaction cytidine(34) in tRNA(Ile2) + L-lysine + ATP = lysidine(34) in tRNA(Ile2) + AMP + diphosphate + H(+). Ligates lysine onto the cytidine present at position 34 of the AUA codon-specific tRNA(Ile) that contains the anticodon CAU, in an ATP-dependent manner. Cytidine is converted to lysidine, thus changing the amino acid specificity of the tRNA from methionine to isoleucine. This chain is tRNA(Ile)-lysidine synthase, found in Chlorobaculum tepidum (strain ATCC 49652 / DSM 12025 / NBRC 103806 / TLS) (Chlorobium tepidum).